Consider the following 341-residue polypeptide: MKALSKLKAEEGIWMTDVPEPEVGHNDLLIKIRKTAICGTDVHIYNWDDWSQKTIPVPMVVGHEYVGEVVGIGQEVKGFKIGDRVSGEGHITCGHCRNCRGGRTHLCRNTTGVGVNRPGCFAEYLVIPALNAFKIPDNISDDLASIFDPFGNAVHTALSFDLVGEDVLVSGAGPIGVMAAAVAKHVGARHVVITDVNEYRLELARKMGVTRAVNVAKESLNDVMAELGMTEGFDVGLEMSGAPPAFCTMLDTMNHGGRIAMLGIPPSDMSIDWTKVIFKGLFIKGIYGREMFETWYKMAALIQSGLDLSPIITHRFSIDDFQKGFDAMRSGQSGKVILSWD.

Residue Cys38 coordinates Zn(2+). Residues Thr40 and His43 each act as charge relay system in the active site. Zn(2+)-binding residues include His63, Glu64, Cys93, Cys96, Cys99, and Cys107. NAD(+) contacts are provided by residues Ile175, Asp195, Arg200, 262 to 264 (LGI), and 286 to 287 (IY).

Belongs to the zinc-containing alcohol dehydrogenase family. Homotetramer. It depends on Zn(2+) as a cofactor.

It localises to the cytoplasm. The catalysed reaction is L-threonine + NAD(+) = (2S)-2-amino-3-oxobutanoate + NADH + H(+). It functions in the pathway amino-acid degradation; L-threonine degradation via oxydo-reductase pathway; glycine from L-threonine: step 1/2. In terms of biological role, catalyzes the NAD(+)-dependent oxidation of L-threonine to 2-amino-3-ketobutyrate. This is L-threonine 3-dehydrogenase from Salmonella gallinarum (strain 287/91 / NCTC 13346).